We begin with the raw amino-acid sequence, 245 residues long: Putative protein phosphatase 2C-like protein 45 (245 aa).

The region spanning 1–188 (MEDRFSTITN…DDISVMLIPL (188 aa)) is the PPM-type phosphatase domain.

Belongs to the PP2C family.

The sequence is that of Putative protein phosphatase 2C-like protein 45 from Arabidopsis thaliana (Mouse-ear cress).